The sequence spans 155 residues: Protein Smg homolog (155 aa).

This sequence belongs to the Smg family.

The protein is Protein Smg homolog of Azoarcus sp. (strain BH72).